A 633-amino-acid chain; its full sequence is Probable alkaline/neutral invertase A, chloroplastic (633 aa).

The transit peptide at M1–R71 directs the protein to the chloroplast. Phosphoserine is present on S623.

The protein belongs to the glycosyl hydrolase 100 family. In terms of tissue distribution, expressed in flowers.

It localises to the plastid. The protein resides in the chloroplast. It catalyses the reaction Hydrolysis of terminal non-reducing beta-D-fructofuranoside residues in beta-D-fructofuranosides.. Chloroplastic invertase that cleaves sucrose into glucose and fructose and may participate in the carbon flux between the cytosol and plastids in leaves. This Arabidopsis thaliana (Mouse-ear cress) protein is Probable alkaline/neutral invertase A, chloroplastic.